The primary structure comprises 384 residues: Glucose-fructose oxidoreductase domain-containing protein 2 (384 aa).

Residues 1–25 (MMTLPGIGVFGTGNTARVLIQLLRA) form the signal peptide. The tract at residues 358-384 (GEWESVELTNEETDSNQNLSEVIQHNL) is disordered. Positions 372 to 384 (SNQNLSEVIQHNL) are enriched in polar residues.

It belongs to the Gfo/Idh/MocA family.

Its subcellular location is the secreted. The protein localises to the extracellular space. It localises to the extracellular matrix. Promotes matrix assembly. The sequence is that of Glucose-fructose oxidoreductase domain-containing protein 2 (gfod2) from Xenopus laevis (African clawed frog).